A 520-amino-acid chain; its full sequence is Cytochrome b5 reductase 4 (520 aa).

M1 carries the N-acetylmethionine modification. The segment covering 1-16 (MLNVPSQSFPGPSSQQ) has biased composition (low complexity). Residues 1 to 27 (MLNVPSQSFPGPSSQQRVASGGRSKVP) are disordered. Residues 54 to 130 (LIEVTEEELK…LKECLVGRMA (77 aa)) form the Cytochrome b5 heme-binding domain. Heme contacts are provided by H89 and H112. The CS domain occupies 164-255 (PSSPSYDWFQ…KENTSWKCLG (92 aa)). Residues 272 to 384 (LFYRKCQLVS…SNPEGNFIIS (113 aa)) enclose the FAD-binding FR-type domain. FAD is bound by residues 364-379 (DQLQ…NPEG) and 391-423 (DLFL…KVKL).

This sequence belongs to the flavoprotein pyridine nucleotide cytochrome reductase family. FAD serves as cofactor.

It is found in the endoplasmic reticulum. It catalyses the reaction 2 Fe(III)-[cytochrome b5] + NADH = 2 Fe(II)-[cytochrome b5] + NAD(+) + H(+). In terms of biological role, NADH-cytochrome b5 reductase involved in endoplasmic reticulum stress response pathway. Plays a critical role in protecting pancreatic beta-cells against oxidant stress, possibly by protecting the cell from excess buildup of reactive oxygen species (ROS). The protein is Cytochrome b5 reductase 4 (CYB5R4) of Bos taurus (Bovine).